The chain runs to 310 residues: Ribosomal RNA small subunit methyltransferase H (310 aa).

Residues 32 to 34 (GGH), D52, F79, D100, and Q107 contribute to the S-adenosyl-L-methionine site.

The protein belongs to the methyltransferase superfamily. RsmH family.

The protein resides in the cytoplasm. It carries out the reaction cytidine(1402) in 16S rRNA + S-adenosyl-L-methionine = N(4)-methylcytidine(1402) in 16S rRNA + S-adenosyl-L-homocysteine + H(+). Specifically methylates the N4 position of cytidine in position 1402 (C1402) of 16S rRNA. This is Ribosomal RNA small subunit methyltransferase H from Bacillus cereus (strain AH187).